The chain runs to 369 residues: Phospho-N-acetylmuramoyl-pentapeptide-transferase (369 aa).

Helical transmembrane passes span 2–22 (IAILLAVAFGITFTLFTTPFF), 54–74 (GLVIVVASIISYFLANFFLGL), 80–100 (GLLVIFMFVGMSLVGFLDDIL), 113–133 (FYKVVLQSFIAVPFALLTFLV), 158–178 (ALFSLGIIGVFSAWVLYLLWI), 195–215 (LDGLAAGAMIFTMLAYVVIGF), 241–261 (PLDMSILAAAILGSLLGFLWW), 268–288 (IMMGDTGALALGGAAAALSIL), 293–313 (LLFLVLGGLFVIEAGSVILQI), and 347–367 (FWIIAGLFTALGIGLFYADWL).

This sequence belongs to the glycosyltransferase 4 family. MraY subfamily. The cofactor is Mg(2+).

The protein localises to the cell membrane. It catalyses the reaction UDP-N-acetyl-alpha-D-muramoyl-L-alanyl-gamma-D-glutamyl-meso-2,6-diaminopimeloyl-D-alanyl-D-alanine + di-trans,octa-cis-undecaprenyl phosphate = di-trans,octa-cis-undecaprenyl diphospho-N-acetyl-alpha-D-muramoyl-L-alanyl-D-glutamyl-meso-2,6-diaminopimeloyl-D-alanyl-D-alanine + UMP. It participates in cell wall biogenesis; peptidoglycan biosynthesis. Catalyzes the initial step of the lipid cycle reactions in the biosynthesis of the cell wall peptidoglycan: transfers peptidoglycan precursor phospho-MurNAc-pentapeptide from UDP-MurNAc-pentapeptide onto the lipid carrier undecaprenyl phosphate, yielding undecaprenyl-pyrophosphoryl-MurNAc-pentapeptide, known as lipid I. This is Phospho-N-acetylmuramoyl-pentapeptide-transferase from Tropheryma whipplei (strain TW08/27) (Whipple's bacillus).